The sequence spans 335 residues: Glycerol-3-phosphate dehydrogenase [NAD(P)+] (335 aa).

3 residues coordinate NADPH: Trp14, Arg33, and Lys111. Residues Lys111, Gly140, and Ser142 each coordinate sn-glycerol 3-phosphate. Ala144 is an NADPH binding site. Sn-glycerol 3-phosphate is bound by residues Lys195, Asp248, Ser258, Arg259, and Asn260. The active-site Proton acceptor is the Lys195. Residue Arg259 coordinates NADPH. Val283 and Glu285 together coordinate NADPH.

This sequence belongs to the NAD-dependent glycerol-3-phosphate dehydrogenase family.

The protein localises to the cytoplasm. It catalyses the reaction sn-glycerol 3-phosphate + NAD(+) = dihydroxyacetone phosphate + NADH + H(+). It carries out the reaction sn-glycerol 3-phosphate + NADP(+) = dihydroxyacetone phosphate + NADPH + H(+). The protein operates within membrane lipid metabolism; glycerophospholipid metabolism. Its function is as follows. Catalyzes the reduction of the glycolytic intermediate dihydroxyacetone phosphate (DHAP) to sn-glycerol 3-phosphate (G3P), the key precursor for phospholipid synthesis. This is Glycerol-3-phosphate dehydrogenase [NAD(P)+] from Burkholderia mallei (strain NCTC 10247).